We begin with the raw amino-acid sequence, 435 residues long: Tungsten-containing formylmethanofuran dehydrogenase 2 subunit B (435 aa).

U121 is a non-standard amino acid (selenocysteine).

It belongs to the FwdB family. This enzyme is composed of six subunits FwdA, FwdC, FwdD, FwdE, FwdF and FwdG. W-bis(molybdopterin guanine dinucleotide) serves as cofactor.

It carries out the reaction N-formylmethanofuran + 2 oxidized [2Fe-2S]-[ferredoxin] + H2O = methanofuran + 2 reduced [2Fe-2S]-[ferredoxin] + CO2 + H(+). Its pathway is one-carbon metabolism; methanogenesis from CO(2); 5,10-methenyl-5,6,7,8-tetrahydromethanopterin from CO(2): step 1/3. In terms of biological role, catalyzes the reversible oxidation of CO(2) and methanofuran (MFR) to N-formylmethanofuran (CHO-MFR). This enzyme is oxygen-labile. In Methanocaldococcus jannaschii (strain ATCC 43067 / DSM 2661 / JAL-1 / JCM 10045 / NBRC 100440) (Methanococcus jannaschii), this protein is Tungsten-containing formylmethanofuran dehydrogenase 2 subunit B (fwdB).